Here is a 501-residue protein sequence, read N- to C-terminus: Cytochrome P450 6j1 (501 aa).

Cys-444 contributes to the heme binding site.

It belongs to the cytochrome P450 family. Requires heme as cofactor.

It localises to the endoplasmic reticulum membrane. The protein localises to the microsome membrane. The polypeptide is Cytochrome P450 6j1 (CYP6J1) (Blattella germanica (German cockroach)).